The chain runs to 416 residues: Putative competence-damage inducible protein (416 aa).

This sequence belongs to the CinA family.

This is Putative competence-damage inducible protein from Geobacillus sp. (strain WCH70).